A 230-amino-acid polypeptide reads, in one-letter code: Ureidoacrylate amidohydrolase RutB (230 aa).

Asp24 functions as the Proton acceptor in the catalytic mechanism. The active site involves Lys133. Cys166 functions as the Nucleophile in the catalytic mechanism.

The protein belongs to the isochorismatase family. RutB subfamily.

It carries out the reaction (Z)-3-ureidoacrylate + H2O + H(+) = (Z)-3-aminoacrylate + NH4(+) + CO2. The catalysed reaction is (Z)-3-ureidoacrylate + H2O = (Z)-3-aminoacrylate + carbamate + H(+). It catalyses the reaction (Z)-2-methylureidoacrylate + H2O + H(+) = (Z)-2-methylaminoacrylate + NH4(+) + CO2. Its function is as follows. Hydrolyzes ureidoacrylate to form aminoacrylate and carbamate. The carbamate hydrolyzes spontaneously, thereby releasing one of the nitrogen atoms of the pyrimidine ring as ammonia and one of its carbon atoms as CO2. The chain is Ureidoacrylate amidohydrolase RutB from Enterobacter sp. (strain 638).